Consider the following 226-residue polypeptide: Protein AF-9 homolog (226 aa).

Positions 8–169 (RIKTLSVSRP…EEFFKILMSR (162 aa)) constitute a YEATS domain. Positions 187–224 (QLEQEEIDRIEIGIEKVDKEIDELKQKLENLVKQEAIN) form a coiled coil.

As to quaternary structure, component of the SWR1 chromatin-remodeling complex composed of at least ACT1, ARP4, RVB1, RVB2, ARP6, YAF9, VPS71, VPS72, SWC3, SWC4, SWC5, SWC7 and SWR1, and perhaps BDF1. Component of the NuA4 histone acetyltransferase complex composed of at least ACT1, ARP4, YAF9, VID21, SWC4, EAF3, EAF5, EAF6, EAF7, EPL1, ESA1, TRA1 and YNG2. Interacts with SWC4.

The protein localises to the cytoplasm. It is found in the nucleus. Functionally, component of the SWR1 complex which mediates the ATP-dependent exchange of histone H2A for the H2A variant HZT1 leading to transcriptional regulation of selected genes by chromatin remodeling. Component of the NuA4 histone acetyltransferase complex which is involved in transcriptional activation of selected genes principally by acetylation of nucleosomal histones H4 and H2A. The NuA4 complex is also involved in DNA repair. Yaf9 may also be required for viability in conditions in which the structural integrity of the spindle is compromised. This chain is Protein AF-9 homolog (YAF9), found in Saccharomyces cerevisiae (strain ATCC 204508 / S288c) (Baker's yeast).